The sequence spans 747 residues: Threonine synthase-like 1 (747 aa).

Position 351 is an N6-(pyridoxal phosphate)lysine (lysine 351).

The protein belongs to the threonine synthase family. Requires pyridoxal 5'-phosphate as cofactor.

The chain is Threonine synthase-like 1 (Thnsl1) from Mus musculus (Mouse).